The primary structure comprises 161 residues: Putative pre-16S rRNA nuclease (161 aa).

The protein belongs to the YqgF nuclease family.

The protein localises to the cytoplasm. In terms of biological role, could be a nuclease involved in processing of the 5'-end of pre-16S rRNA. The sequence is that of Putative pre-16S rRNA nuclease from Bradyrhizobium sp. (strain ORS 278).